The chain runs to 2556 residues: Non-reducing polyketide synthase tazA (2556 aa).

An N-terminal acylcarrier protein transacylase domain (SAT) region spans residues 16–270 (LFGPQALSFT…QAIGLRGRFH (255 aa)). The active-site Nucleophile; for transacylase activity is Cys-143. Residue His-270 is the Proton donor/acceptor; for transacylase activity of the active site. Positions 397-769 (EDEIAVIGMA…GSNASMIVTQ (373 aa)) constitute a Ketosynthase family 3 (KS3) domain. The interval 876–1209 (CFGGQISRFV…WAHHCTQAPA (334 aa)) is malonyl-CoA:ACP transacylase (MAT) domain. Residues 1254–1383 (YTFVGYQDEG…GQIIFQSAAE (130 aa)) are N-terminal hotdog fold. Residues 1254–1560 (YTFVGYQDEG…YSRLPKSTMS (307 aa)) form the PKS/mFAS DH domain. The segment at 1257 to 1564 (VGYQDEGKRQ…PKSTMSKMLT (308 aa)) is product template (PT) domain. His-1285 (proton acceptor; for dehydratase activity) is an active-site residue. Residues 1408-1560 (DPDDVLQGRN…YSRLPKSTMS (153 aa)) form a C-terminal hotdog fold region. The Proton donor; for dehydratase activity role is filled by Asp-1465. Residues 1567 to 1621 (TAPSERRAQVDSPSMPASINAPPSASEQAPVEPAPQTKESAPIAEPGAGGQSNSK) are disordered. Residues 1577–1593 (DSPSMPASINAPPSASE) are compositionally biased toward polar residues. Positions 1620–1694 (SKVPGIVVEV…DVVQCVHKTL (75 aa)) constitute a Carrier domain. Ser-1654 is modified (O-(pantetheine 4'-phosphoryl)serine). Residues 1700–1731 (SAAQESEGNLTPASSGTQSPRSDPVSDTSLSD) are disordered. The span at 1702–1731 (AQESEGNLTPASSGTQSPRSDPVSDTSLSD) shows a compositional bias: polar residues. The interval 1830–2107 (LEHEGRLIDI…DWTDGHLAEN (278 aa)) is methyltransferase domain. The segment at 2180-2424 (VTGATGSLGA…WTPVDVVAST (245 aa)) is NADPH-binding (R) domain.

Pantetheine 4'-phosphate serves as cofactor.

It participates in secondary metabolite biosynthesis. In terms of biological role, non-reducing polyketide synthase; part of the gene cluster that mediates the biosynthesis of azaterrilone A and other azaphilones, a class of fungal metabolites characterized by a highly oxygenated pyrano-quinone bicyclic core and exhibiting a broad range of bioactivities. The first step of the pathway begins with tazA that assembles one acetyl-CoA starter unit, five malonyl-CoA units, and catalyzes a series of Claisen condensations, methylation, PT-mediated cyclization, and finally releases the first hexaketide precursor through the R-domain. The tazA product then undergoes reduction on its terminal ketone and the following pyran-ring formation by yet undetermined enzyme(s). Dehydration and enoyl reduction, possibly involving the trans-enoyl reductase tazE leads to the next intermediate. TazD is predicted as an acetyltransferase and might catalyze the acetylation steps leading to the synthesis of azaterrilone A. Azaterrilone A is not the final product of the taz pathway and both the highly reducing polyketide synthase tazB and the dual enzyme tazHJ catalyze late steps of the pathway, leading to the production of the 2 final stereoisomers that contain additional polyketide modification whose structures have still to be determined. The chain is Non-reducing polyketide synthase tazA from Aspergillus terreus (strain NIH 2624 / FGSC A1156).